Here is a 684-residue protein sequence, read N- to C-terminus: Glycine--tRNA ligase beta subunit (684 aa).

The protein belongs to the class-II aminoacyl-tRNA synthetase family. Tetramer of two alpha and two beta subunits.

Its subcellular location is the cytoplasm. The catalysed reaction is tRNA(Gly) + glycine + ATP = glycyl-tRNA(Gly) + AMP + diphosphate. This chain is Glycine--tRNA ligase beta subunit, found in Pseudomonas aeruginosa (strain UCBPP-PA14).